The primary structure comprises 336 residues: Probable G-protein coupled receptor 160 (336 aa).

Residues Met-1–Gln-20 are Extracellular-facing. Asn-8 carries N-linked (GlcNAc...) asparagine glycosylation. A helical membrane pass occupies residues Leu-21–Leu-41. Over Leu-42–Glu-56 the chain is Cytoplasmic. A helical membrane pass occupies residues Tyr-57–Thr-77. At Tyr-78 to Cys-95 the chain is on the extracellular side. The chain crosses the membrane as a helical span at residues Leu-96–Ala-116. Over Cys-117–Lys-136 the chain is Cytoplasmic. The helical transmembrane segment at Leu-137–Asp-157 threads the bilayer. Topologically, residues Pro-158 to Ser-186 are extracellular. The helical transmembrane segment at Leu-187–Leu-207 threads the bilayer. Over Leu-208–Arg-243 the chain is Cytoplasmic. The chain crosses the membrane as a helical span at residues Leu-244–Ser-264. Topologically, residues Leu-265–Tyr-272 are extracellular. The chain crosses the membrane as a helical span at residues Ile-273–Trp-293. Over Phe-294 to Cys-336 the chain is Cytoplasmic.

Belongs to the G-protein coupled receptor 1 family.

The protein localises to the cell membrane. Functionally, orphan receptor. The protein is Probable G-protein coupled receptor 160 (Gpr160) of Mus musculus (Mouse).